The sequence spans 145 residues: uncharacterized protein (145 aa).

It belongs to the methyltransferase superfamily.

Functionally, probable methyltransferase. This is an uncharacterized protein from Schizosaccharomyces pombe (strain 972 / ATCC 24843) (Fission yeast).